The sequence spans 781 residues: Mitochondrial inner membrane m-AAA protease component paraplegin (781 aa).

The N-terminal 43 residues, 1–43 (MAAALLLLRALRQSPEPGPWRLWAQLSGRSPGLFSGAGGRRPY), are a transit peptide targeting the mitochondrion. The propeptide at 44-105 (VVRGTPIGLA…GSTLYFNTSG (62 aa)) is removed in mature form. The disordered stretch occupies residues 105 to 134 (GLKQKNKDDDKPKGKAPEDDEEERRRKERE). Residues 106–144 (LKQKNKDDDKPKGKAPEDDEEERRRKEREDQMYRERLRT) are Mitochondrial matrix-facing. A compositionally biased stretch (basic and acidic residues) spans 109–134 (KNKDDDKPKGKAPEDDEEERRRKERE). A helical transmembrane segment spans residues 145–165 (LFIIAIVMSLLNSLSTSGGSI). Over 166–248 (SWADFVNEML…DRIPVSYKRT (83 aa)) the chain is Mitochondrial intermembrane. The chain crosses the membrane as a helical span at residues 249–269 (GFFGNALYALGMTAVGLAILW). Residues 270–781 (YVFRLAGMTG…ASGEEEAPAP (512 aa)) are Mitochondrial matrix-facing. The ATP site is built by A312, G352, C353, G354, K355, T356, and L357. A 3'-nitrotyrosine modification is found at Y505. H574 provides a ligand contact to Zn(2+). Residue E575 is part of the active site. 2 residues coordinate Zn(2+): H578 and D650. The tract at residues 701-781 (HEARLLVARA…ASGEEEAPAP (81 aa)) is interaction with PPIF.

It in the N-terminal section; belongs to the AAA ATPase family. In the C-terminal section; belongs to the peptidase M41 family. Forms heterooligomers with AFG3L2; the m-AAA protease is composed of heterohexamers of AFG3L2 and SPG7. Component of the mitochondrial permeability transition pore complex (mPTPC), at least composed of SPG7, VDAC1 and PPIF. Interacts with MAIP1. The cofactor is Zn(2+). Post-translationally, upon import into the mitochondrion, the N-terminal transit peptide is cleaved by the mitochondrial-processing peptidase (MPP) to generate an intermediate form which undergoes a second proteolytic cleavage mediated by proteases AFG3L2 removing an additional N-terminal fragment to generate the proteolytically active mature form.

It is found in the mitochondrion inner membrane. It catalyses the reaction ATP + H2O = ADP + phosphate + H(+). In terms of biological role, catalytic component of the m-AAA protease, a protease that plays a key role in proteostasis of inner mitochondrial membrane proteins, and which is essential for axonal and neuron development. SPG7 possesses both ATPase and protease activities: the ATPase activity is required to unfold substrates, threading them into the internal proteolytic cavity for hydrolysis into small peptide fragments. The m-AAA protease exerts a dual role in the mitochondrial inner membrane: it mediates the processing of specific regulatory proteins and ensures protein quality control by degrading misfolded polypeptides. Mediates protein maturation of the mitochondrial ribosomal subunit MRPL32/bL32m by catalyzing the cleavage of the presequence of MRPL32/bL32m prior to assembly into the mitochondrial ribosome. Acts as a regulator of calcium in neurons by mediating degradation of SMDT1/EMRE before its assembly with the uniporter complex, limiting the availability of SMDT1/EMRE for MCU assembly and promoting efficient assembly of gatekeeper subunits with MCU. Also regulates mitochondrial calcium by catalyzing degradation of MCU. Plays a role in the formation and regulation of the mitochondrial permeability transition pore (mPTP) and its proteolytic activity is dispensable for this function. This Rattus norvegicus (Rat) protein is Mitochondrial inner membrane m-AAA protease component paraplegin (Spg7).